The following is a 306-amino-acid chain: Curved DNA-binding protein (306 aa).

One can recognise a J domain in the interval 5–69; sequence DYYAIMGVKP…QRRAEYDQLW (65 aa).

Its subcellular location is the cytoplasm. It localises to the nucleoid. DNA-binding protein that preferentially recognizes a curved DNA sequence. It is probably a functional analog of DnaJ; displays overlapping activities with DnaJ, but functions under different conditions, probably acting as a molecular chaperone in an adaptive response to environmental stresses other than heat shock. Lacks autonomous chaperone activity; binds native substrates and targets them for recognition by DnaK. Its activity is inhibited by the binding of CbpM. This is Curved DNA-binding protein from Citrobacter koseri (strain ATCC BAA-895 / CDC 4225-83 / SGSC4696).